Reading from the N-terminus, the 849-residue chain is MRFFRKTSLYLSLFLYFFLYESSMAANTIRRGESLRDGINHKPLVSPQKTFELGFFSPGSSTHRFLGIWYGNIEDKAVVWVANRATPISDQSGVLMISNDGNLVLLDGKNITVWSSNIESSTTNNNNRVVSIHDTGNFVLSETDTDRPIWESFNHPTDTFLPQMRVRVNPQTGDNHAFVSWRSETDPSPGNYSLGVDPSGAPEIVLWEGNKTRKWRSGQWNSAIFTGIPNMSLLTNYLYGFKLSSPPDETGSVYFTYVPSDPSVLLRFKVLYNGTEEELRWNETLKKWTKFQSEPDSECDQYNRCGKFGICDMKGSNGICSCIHGYEQVSVGNWSRGCRRRTPLKCERNISVGEDEFLTLKSVKLPDFEIPEHNLVDPEDCRERCLRNCSCNAYSLVGGIGCMIWNQDLVDLQQFEAGGSSLHIRLADSEVGENRKTKIAVIVAVLVGVILIGIFALLLWRFKRKKDVSGAYCGKNTDTSVVVADLTKSKETTSAFSGSVDIMIEGKAVNTSELPVFSLNAIAIATNDFCKENELGRGGFGPVYKGVLEDGREIAVKRLSGKSGQGVDEFKNEIILIAKLQHRNLVRLLGCCFEGEEKMLVYEYMPNKSLDFFLFDETKQALIDWKLRFSIIEGIARGLLYLHRDSRLRIIHRDLKVSNVLLDAEMNPKISDFGMARIFGGNQNEANTVRVVGTYGYMSPEYAMEGLFSVKSDVYSFGVLLLEIVSGKRNTSLRSSEHGSLIGYAWYLYTHGRSEELVDPKIRVTCSKREALRCIHVAMLCVQDSAAERPNMASVLLMLESDTATLAAPRQPTFTSTRRNSIDVNFALDSSQQYIVSSNEITSTVVLGR.

The N-terminal stretch at 1–25 (MRFFRKTSLYLSLFLYFFLYESSMA) is a signal peptide. The Bulb-type lectin domain occupies 26–153 (ANTIRRGESL…DTDRPIWESF (128 aa)). The Extracellular portion of the chain corresponds to 26 to 438 (ANTIRRGESL…SEVGENRKTK (413 aa)). N-linked (GlcNAc...) asparagine glycans are attached at residues asparagine 110, asparagine 191, asparagine 210, asparagine 230, asparagine 273, and asparagine 282. One can recognise an EGF-like; atypical domain in the interval 295 to 332 (PDSECDQYNRCGKFGICDMKGSNGICSCIHGYEQVSVG). Disulfide bonds link cysteine 299/cysteine 311 and cysteine 305/cysteine 320. Asparagine 333, asparagine 349, and asparagine 388 each carry an N-linked (GlcNAc...) asparagine glycan. In terms of domain architecture, PAN spans 346 to 427 (CERNISVGED…GGSSLHIRLA (82 aa)). Disulfide bonds link cysteine 381/cysteine 402 and cysteine 385/cysteine 391. Residues 439–459 (IAVIVAVLVGVILIGIFALLL) form a helical membrane-spanning segment. The Cytoplasmic portion of the chain corresponds to 460–849 (WRFKRKKDVS…EITSTVVLGR (390 aa)). The Protein kinase domain occupies 529-814 (FCKENELGRG…TLAAPRQPTF (286 aa)). ATP contacts are provided by residues 535-543 (LGRGGFGPV) and lysine 557. Serine 563 is modified (phosphoserine). The tract at residues 618–635 (TKQALIDWKLRFSIIEGI) is caM-binding. The active-site Proton acceptor is the aspartate 654. Phosphoserine is present on residues serine 658 and serine 671. Position 688 is a phosphothreonine (threonine 688). Serine 732 and serine 837 each carry phosphoserine. Threonine 844 carries the post-translational modification Phosphothreonine.

Belongs to the protein kinase superfamily. Ser/Thr protein kinase family.

It localises to the cell membrane. The enzyme catalyses L-seryl-[protein] + ATP = O-phospho-L-seryl-[protein] + ADP + H(+). It carries out the reaction L-threonyl-[protein] + ATP = O-phospho-L-threonyl-[protein] + ADP + H(+). This Arabidopsis thaliana (Mouse-ear cress) protein is G-type lectin S-receptor-like serine/threonine-protein kinase B120 (B120).